The following is a 313-amino-acid chain: MAFSFQLQQVFPFPVKFCSQPKSIKLQIFPNLTKRLPIHPLASAQNNATSNIDHNYIAMDESSINEEEVPLPTELSRELMPKHIAVIMDGNRRWAKRRGLPVALGYAAGIRVLRNFVKLSYNWGISALTLFAFSSENWFRPKAEVDLLMGLFDKVLKDELENLARTGIRLSIIGDASQLPKSLQDLIDKAVMATKANSRLHILVAINYSGQYDVVQACQTIAQRVKDGNIEPEDINSLLVEQELQTKCTEFPSPDLLIRTSGELRLSNFLLWQLAYTELFFSHSQWPDFGEAEFLEALCSFQQRQRRYGGQSS.

A chloroplast-targeting transit peptide spans 1–42 (MAFSFQLQQVFPFPVKFCSQPKSIKLQIFPNLTKRLPIHPLA). Asp89 is a catalytic residue.

Belongs to the UPP synthase family. The cofactor is Mg(2+). Expressed in leaf trichomes, stem trichomes and old leaves. Expressed at low levels in young leaves and flowers.

The protein localises to the plastid. It is found in the chloroplast. The enzyme catalyses n isopentenyl diphosphate + (2E,6E)-farnesyl diphosphate = a di-trans,poly-cis-polyprenyl diphosphate + n diphosphate. Functionally, catalyzes cis-prenyl chain elongation to produce the polyprenyl backbone of dolichol, a glycosyl carrier-lipid required for the biosynthesis of several classes of glycoprotein. The protein is Dehydrodolichyl diphosphate synthase CPT5, chloroplastic of Solanum lycopersicum (Tomato).